Reading from the N-terminus, the 338-residue chain is 4'-phosphopantetheinyl transferase (338 aa).

It belongs to the P-Pant transferase superfamily.

The enzyme catalyses apo-[ACP] + CoA = holo-[ACP] + adenosine 3',5'-bisphosphate + H(+). In terms of biological role, acyl-carrier-protein synthase that transfers the 4'-phosphopantetheine moiety from coenzyme A to a Ser of an acyl-carrier-protein. The 4'-phosphopantetheine (4'-PPT) portion of CoA provides the essential prosthetic group for a number of carrier proteins and multi-domain enzymes, priming them for the acceptance of acyl building blocks in fatty acid synthesis and many aspects of secondary metabolism mediated by polyketide synthases (PKSs) and non-ribosomal peptide synthetases (NRPSs). Plays a key role in liamocins biosynthesis by activationg the HR-PKS PKS1 that produces 3,5-dihydroxydecanoic acid, a precursor of liamocins. The sequence is that of 4'-phosphopantetheinyl transferase from Aureobasidium melanogenum (Aureobasidium pullulans var. melanogenum).